The primary structure comprises 473 residues: Aspartyl/glutamyl-tRNA(Asn/Gln) amidotransferase subunit B (473 aa).

This sequence belongs to the GatB/GatE family. GatB subfamily. Heterotrimer of A, B and C subunits.

The catalysed reaction is L-glutamyl-tRNA(Gln) + L-glutamine + ATP + H2O = L-glutaminyl-tRNA(Gln) + L-glutamate + ADP + phosphate + H(+). It carries out the reaction L-aspartyl-tRNA(Asn) + L-glutamine + ATP + H2O = L-asparaginyl-tRNA(Asn) + L-glutamate + ADP + phosphate + 2 H(+). Functionally, allows the formation of correctly charged Asn-tRNA(Asn) or Gln-tRNA(Gln) through the transamidation of misacylated Asp-tRNA(Asn) or Glu-tRNA(Gln) in organisms which lack either or both of asparaginyl-tRNA or glutaminyl-tRNA synthetases. The reaction takes place in the presence of glutamine and ATP through an activated phospho-Asp-tRNA(Asn) or phospho-Glu-tRNA(Gln). This Mycoplasmopsis synoviae (strain 53) (Mycoplasma synoviae) protein is Aspartyl/glutamyl-tRNA(Asn/Gln) amidotransferase subunit B.